A 92-amino-acid polypeptide reads, in one-letter code: Small ribosomal subunit protein uS19 (92 aa).

It belongs to the universal ribosomal protein uS19 family.

Protein S19 forms a complex with S13 that binds strongly to the 16S ribosomal RNA. The sequence is that of Small ribosomal subunit protein uS19 (rpsS) from Halalkalibacterium halodurans (strain ATCC BAA-125 / DSM 18197 / FERM 7344 / JCM 9153 / C-125) (Bacillus halodurans).